Reading from the N-terminus, the 651-residue chain is Acetyl-coenzyme A synthetase (651 aa).

CoA is bound by residues 189-192, threonine 311, and asparagine 335; that span reads RGGK. Residues 387–389, 411–416, aspartate 500, and arginine 515 contribute to the ATP site; these read GEP and DTWWQT. Serine 523 is a CoA binding site. Position 526 (arginine 526) interacts with ATP. 3 residues coordinate Mg(2+): valine 537, histidine 539, and valine 542. A CoA-binding site is contributed by arginine 584. An N6-acetyllysine modification is found at lysine 609.

This sequence belongs to the ATP-dependent AMP-binding enzyme family. Mg(2+) is required as a cofactor. In terms of processing, acetylated. Deacetylation by the SIR2-homolog deacetylase activates the enzyme.

It catalyses the reaction acetate + ATP + CoA = acetyl-CoA + AMP + diphosphate. Functionally, catalyzes the conversion of acetate into acetyl-CoA (AcCoA), an essential intermediate at the junction of anabolic and catabolic pathways. AcsA undergoes a two-step reaction. In the first half reaction, AcsA combines acetate with ATP to form acetyl-adenylate (AcAMP) intermediate. In the second half reaction, it can then transfer the acetyl group from AcAMP to the sulfhydryl group of CoA, forming the product AcCoA. The polypeptide is Acetyl-coenzyme A synthetase (Rhizobium etli (strain CIAT 652)).